Here is a 576-residue protein sequence, read N- to C-terminus: Proline--tRNA ligase (576 aa).

This sequence belongs to the class-II aminoacyl-tRNA synthetase family. ProS type 1 subfamily. As to quaternary structure, homodimer.

It localises to the cytoplasm. The enzyme catalyses tRNA(Pro) + L-proline + ATP = L-prolyl-tRNA(Pro) + AMP + diphosphate. Catalyzes the attachment of proline to tRNA(Pro) in a two-step reaction: proline is first activated by ATP to form Pro-AMP and then transferred to the acceptor end of tRNA(Pro). As ProRS can inadvertently accommodate and process non-cognate amino acids such as alanine and cysteine, to avoid such errors it has two additional distinct editing activities against alanine. One activity is designated as 'pretransfer' editing and involves the tRNA(Pro)-independent hydrolysis of activated Ala-AMP. The other activity is designated 'posttransfer' editing and involves deacylation of mischarged Ala-tRNA(Pro). The misacylated Cys-tRNA(Pro) is not edited by ProRS. This Bordetella bronchiseptica (strain ATCC BAA-588 / NCTC 13252 / RB50) (Alcaligenes bronchisepticus) protein is Proline--tRNA ligase.